Consider the following 170-residue polypeptide: Chorion protein S18 (170 aa).

A signal peptide spans 1-17 (MMKFMCIFVCAIAAVSA). The segment covering 146–159 (AAAASSSVAGQHSG) has biased composition (low complexity). The interval 146 to 170 (AAAASSSVAGQHSGYKNSGYKNSSY) is disordered. Over residues 160–170 (YKNSGYKNSSY) the composition is skewed to polar residues.

This sequence belongs to the chorion protein S15/S18 family.

Its subcellular location is the secreted. Functionally, chorion membrane (egg shell) protein; plays a role in protecting the egg from the environment. This Drosophila virilis (Fruit fly) protein is Chorion protein S18 (Cp18).